The chain runs to 550 residues: Eukaryotic translation initiation factor 3 subunit D-2 (550 aa).

The tract at residues 97–126 is disordered; sequence RGRGFRPSVHNNPRNVRNQRGRKGNAMGNI. An RNA gate region spans residues 287–301; it reads KFDMLTVNETSQEPP. A disordered region spans residues 530–550; the sequence is SDVSEEEESSEDKPFGLSMNN.

This sequence belongs to the eIF-3 subunit D family. Component of the eukaryotic translation initiation factor 3 (eIF-3) complex. The eIF-3 complex interacts with pix.

The protein resides in the cytoplasm. MRNA cap-binding component of the eukaryotic translation initiation factor 3 (eIF-3) complex, which is involved in protein synthesis of a specialized repertoire of mRNAs and, together with other initiation factors, stimulates binding of mRNA and methionyl-tRNAi to the 40S ribosome. The eIF-3 complex specifically targets and initiates translation of a subset of mRNAs involved in cell proliferation. In the eIF-3 complex, eif3d specifically recognizes and binds the 7-methylguanosine cap of a subset of mRNAs. The polypeptide is Eukaryotic translation initiation factor 3 subunit D-2 (Drosophila willistoni (Fruit fly)).